A 467-amino-acid polypeptide reads, in one-letter code: Uronate isomerase (467 aa).

This sequence belongs to the metallo-dependent hydrolases superfamily. Uronate isomerase family.

It catalyses the reaction D-glucuronate = D-fructuronate. The catalysed reaction is aldehydo-D-galacturonate = keto-D-tagaturonate. The protein operates within carbohydrate metabolism; pentose and glucuronate interconversion. The chain is Uronate isomerase from Staphylococcus haemolyticus (strain JCSC1435).